Here is a 304-residue protein sequence, read N- to C-terminus: Quinolinate synthase (304 aa).

The iminosuccinate site is built by histidine 24 and serine 41. [4Fe-4S] cluster is bound at residue cysteine 86. Residues 112 to 114 (YVN) and serine 129 contribute to the iminosuccinate site. Cysteine 171 lines the [4Fe-4S] cluster pocket. Residues 197–199 (HPE) and threonine 214 each bind iminosuccinate. Residue cysteine 259 coordinates [4Fe-4S] cluster.

Belongs to the quinolinate synthase family. Type 2 subfamily. It depends on [4Fe-4S] cluster as a cofactor.

The protein localises to the cytoplasm. It catalyses the reaction iminosuccinate + dihydroxyacetone phosphate = quinolinate + phosphate + 2 H2O + H(+). It participates in cofactor biosynthesis; NAD(+) biosynthesis; quinolinate from iminoaspartate: step 1/1. In terms of biological role, catalyzes the condensation of iminoaspartate with dihydroxyacetone phosphate to form quinolinate. This Geobacter sp. (strain M21) protein is Quinolinate synthase.